We begin with the raw amino-acid sequence, 239 residues long: Ribosomal RNA small subunit methyltransferase G (239 aa).

S-adenosyl-L-methionine-binding positions include G78, F83, A129–E130, and R148.

It belongs to the methyltransferase superfamily. RNA methyltransferase RsmG family.

It is found in the cytoplasm. In terms of biological role, specifically methylates the N7 position of a guanine in 16S rRNA. In Clostridium beijerinckii (strain ATCC 51743 / NCIMB 8052) (Clostridium acetobutylicum), this protein is Ribosomal RNA small subunit methyltransferase G.